Here is a 156-residue protein sequence, read N- to C-terminus: Ribosomal RNA large subunit methyltransferase H (156 aa).

S-adenosyl-L-methionine contacts are provided by residues Leu73, Gly104, and 123–128; that span reads LSALTL.

It belongs to the RNA methyltransferase RlmH family. Homodimer.

The protein resides in the cytoplasm. The catalysed reaction is pseudouridine(1915) in 23S rRNA + S-adenosyl-L-methionine = N(3)-methylpseudouridine(1915) in 23S rRNA + S-adenosyl-L-homocysteine + H(+). Functionally, specifically methylates the pseudouridine at position 1915 (m3Psi1915) in 23S rRNA. In Erwinia tasmaniensis (strain DSM 17950 / CFBP 7177 / CIP 109463 / NCPPB 4357 / Et1/99), this protein is Ribosomal RNA large subunit methyltransferase H.